Reading from the N-terminus, the 488-residue chain is MSNNVYERNRIKNDRYESGVIPYAKMGYWDANYSVKDTDLLALFRLTPQPGVDPVEAAAAVAGESSTATWTVVWTDLLTACDVYRAKAYRVDPVPSAADQYFAYIAYECDLFEEGSLANMTASIIGNVFGFKAVAALRLEDMRIPYAYLKTFQGPATGIIVERERLDTFGRPLLGATVKPKLGLSGKNYGRVVYEGLRGGIDFLKDDENINSQPFMRWRERFLYCMEGINRASAASGEVKGSYLNVTAATMEEMYERADYAKAVGSVIVMIDLVIGYTAIQSMAIWARKNDMILHLHRAGNSTYARQKNHGINFRVICKWMRMAGVDHIHAGTVVGKLEGDPLMVKGFYDVLRETELSINLPQGIFFEMDWASLRKCCPVASGGIHCGQMHQLVYYLGDDVVLQFGGGTIGHPDGIQAGATANRVALEAMILARNEGRDYVSEGPEILRDIAKLCGPLKTALDLWKGITFNYTSTDTADFVETATSNP.

The substrate site is built by Asn127 and Thr177. Lys179 acts as the Proton acceptor in catalysis. A substrate-binding site is contributed by Lys181. Lys205, Asp207, and Glu208 together coordinate Mg(2+). Residue Lys205 is modified to N6-carboxylysine. The active-site Proton acceptor is the His297. Positions 298, 330, and 382 each coordinate substrate.

It belongs to the RuBisCO large chain family. Type I subfamily. In terms of assembly, heterohexadecamer of 8 large chains and 8 small chains. It depends on Mg(2+) as a cofactor.

It localises to the plastid. Its subcellular location is the chloroplast. The enzyme catalyses 2 (2R)-3-phosphoglycerate + 2 H(+) = D-ribulose 1,5-bisphosphate + CO2 + H2O. It carries out the reaction D-ribulose 1,5-bisphosphate + O2 = 2-phosphoglycolate + (2R)-3-phosphoglycerate + 2 H(+). In terms of biological role, ruBisCO catalyzes two reactions: the carboxylation of D-ribulose 1,5-bisphosphate, the primary event in carbon dioxide fixation, as well as the oxidative fragmentation of the pentose substrate in the photorespiration process. Both reactions occur simultaneously and in competition at the same active site. The chain is Ribulose bisphosphate carboxylase large chain from Olisthodiscus luteus (Marine phytoflagellate).